The sequence spans 293 residues: GTPase Era (293 aa).

The Era-type G domain maps to 2–168 (KILFSTIIGR…INEIKKYSYE (167 aa)). Residues 10-17 (GRPNVGKS) form a G1 region. 10-17 (GRPNVGKS) provides a ligand contact to GTP. Residues 36-40 (QATRD) form a G2 region. The G3 stretch occupies residues 57–60 (DTPG). GTP contacts are provided by residues 57-61 (DTPGI) and 118-121 (TKID). Residues 118-121 (TKID) form a G4 region. Positions 147–149 (ISS) are G5. Positions 199 to 279 (LEQELPHSIL…KLFLKIKVKK (81 aa)) constitute a KH type-2 domain.

It belongs to the TRAFAC class TrmE-Era-EngA-EngB-Septin-like GTPase superfamily. Era GTPase family. In terms of assembly, monomer.

The protein localises to the cytoplasm. The protein resides in the cell membrane. Functionally, an essential GTPase that binds both GDP and GTP, with rapid nucleotide exchange. Plays a role in 16S rRNA processing and 30S ribosomal subunit biogenesis and possibly also in cell cycle regulation and energy metabolism. The chain is GTPase Era from Mycoplasmopsis pulmonis (strain UAB CTIP) (Mycoplasma pulmonis).